The following is a 139-amino-acid chain: Thioredoxin H-type (139 aa).

A Thioredoxin domain is found at 20–132; it reads ELAGGNVHLI…LHKKITAILD (113 aa). Catalysis depends on nucleophile residues cysteine 58 and cysteine 61. Cysteine 58 and cysteine 61 form a disulfide bridge.

The protein resides in the cytoplasm. Its function is as follows. Participates in various redox reactions through the reversible oxidation of the active center dithiol to a disulfide. The H form is known to activate a number of cytosolic enzymes. This chain is Thioredoxin H-type, found in Populus jackii (Balm of Gilead).